A 500-amino-acid polypeptide reads, in one-letter code: Na(+)/H(+) antiporter NhaB (500 aa).

A run of 11 helical transmembrane segments spans residues 13-33 (FLGASPLWYKQVVIAFLIINP), 34-54 (IAVVTLGPFVTGWLFIIEFIF), 62-82 (CYPLQPGGLIAIQAVLLGLTS), 97-117 (ILLLMFMVAGIYFMKDMLLFI), 129-149 (IVISLIFSFSAALLSAFLDAL), 242-262 (FLYVAPVSMPVLACGLLTVVI), 306-326 (GIVAIILILSLAFHIAEVGLV), 350-370 (FEEALPFTALLVVFFTIVSVI), 392-412 (PIMFFIANGILSAISDNVFVA), 449-469 (VATPNGQAAFLFLLTSAIAPL), and 477-497 (MVWMALPYTVVLSVVGGLCVT).

This sequence belongs to the NhaB Na(+)/H(+) (TC 2.A.34) antiporter family.

The protein localises to the cell inner membrane. The enzyme catalyses 2 Na(+)(in) + 3 H(+)(out) = 2 Na(+)(out) + 3 H(+)(in). Its function is as follows. Na(+)/H(+) antiporter that extrudes sodium in exchange for external protons. This is Na(+)/H(+) antiporter NhaB from Marinomonas sp. (strain MWYL1).